A 471-amino-acid polypeptide reads, in one-letter code: Putative multidrug resistance protein MdtD (471 aa).

At 1 to 11 the chain is on the periplasmic side; the sequence is MTDLPDSTRWQ. Residues 12–32 form a helical membrane-spanning segment; the sequence is LWIVAFGFFMQSLDTTIVNTA. Residues 33 to 48 are Cytoplasmic-facing; that stretch reads LPSMAQSLGESPLHMH. The helical transmembrane segment at 49–69 threads the bilayer; it reads MVIVSYVLTVAVMLPASGWLA. At 70-76 the chain is on the periplasmic side; it reads DKVGVRN. Residues 77 to 97 form a helical membrane-spanning segment; it reads IFFTAIVLFTLGSLFCALSGT. Residues 98-101 are Cytoplasmic-facing; that stretch reads LNEL. Residues 102-124 form a helical membrane-spanning segment; that stretch reads LLARALQGVGGAMMVPVGRLTVM. At 125–137 the chain is on the periplasmic side; that stretch reads KIVPREQYMAAMT. The helical transmembrane segment at 138 to 158 threads the bilayer; that stretch reads FVTLPGQVGPLLGPALGGLLV. The Cytoplasmic portion of the chain corresponds to 159-164; it reads EYASWH. A helical membrane pass occupies residues 165-185; it reads WIFLINIPVGIIGAIATLMLM. The Periplasmic segment spans residues 186-196; it reads PNYTMQTRRFD. Residues 197-217 form a helical membrane-spanning segment; that stretch reads LSGFLLLAVGMAVLTLALDGS. At 218 to 224 the chain is on the cytoplasmic side; that stretch reads KGTGLSP. A helical transmembrane segment spans residues 225-245; sequence LAIAGLVAVGVVALVLYLLHA. The Periplasmic portion of the chain corresponds to 246–262; the sequence is RNNNRALFSLKLFRTRT. Residues 263 to 283 form a helical membrane-spanning segment; that stretch reads FSLGLAGSFAGRIGSGMLPFM. At 284–285 the chain is on the cytoplasmic side; sequence TP. The chain crosses the membrane as a helical span at residues 286-306; it reads VFLQIGLGFSPFHAGLMMIPM. The Periplasmic segment spans residues 307–341; the sequence is VLGSMGMKRIVVQVVNRFGYRRVLVATTLGLSLVT. The chain crosses the membrane as a helical span at residues 342–362; sequence LLFMTTALLGWYYVLPFVLFL. At 363 to 395 the chain is on the cytoplasmic side; sequence QGMVNSTRFSSMNTLTLKDLPDNLASSGNSLLS. The helical transmembrane segment at 396–416 threads the bilayer; it reads MIMQLSMSIGVTIAGLLLGLF. Over 417-430 the chain is Periplasmic; that stretch reads GSQHVSIDSGTTQT. The chain crosses the membrane as a helical span at residues 431 to 451; it reads VFMYTWLSMALIIALPAFIFA. At 452–471 the chain is on the cytoplasmic side; that stretch reads RVPNDTHQNVAISRRKRSAQ.

The protein belongs to the major facilitator superfamily. TCR/Tet family.

Its subcellular location is the cell inner membrane. The sequence is that of Putative multidrug resistance protein MdtD from Escherichia coli (strain 55989 / EAEC).